Here is a 366-residue protein sequence, read N- to C-terminus: MQRLPIEQYSALLAEKQQKLTELLAPFNSPPLDVFASETSHFRMRAEFRIWHEQDDFYHIMFDQKTKQRFRIDQFPIASQLINQMMLALLPLLKQHNILTHRLFQIDYLSTLSNKIIVSLLYHKTLNEEWLQAATQLKQQLIKQGFDVQIIGRANKQKICLQQDFVDEILPVKNQQYIYRQVENSFTQPNATVNCKMLEWAIDCTKNSQGDLLELYCGNGNFSIALAQNFRKVLATEIAKPSVSAAQFNIAANKIDNLHIIRMSAEDFTQAMNGVRAFNRLKGINLQDYQCNTIFVDPPRAGLDMATVKLVQNYERILYISCNPYTLCENLQELTKTHRIEKAALFDQFPYTEHMESGVWLIKKSN.

S-adenosyl-L-methionine contacts are provided by glutamine 188, tyrosine 216, asparagine 221, glutamate 237, and aspartate 297. Cysteine 322 serves as the catalytic Nucleophile. Glutamate 356 serves as the catalytic Proton acceptor.

Belongs to the class I-like SAM-binding methyltransferase superfamily. RNA M5U methyltransferase family. TrmA subfamily.

The catalysed reaction is uridine(54) in tRNA + S-adenosyl-L-methionine = 5-methyluridine(54) in tRNA + S-adenosyl-L-homocysteine + H(+). The enzyme catalyses uridine(341) in tmRNA + S-adenosyl-L-methionine = 5-methyluridine(341) in tmRNA + S-adenosyl-L-homocysteine + H(+). Dual-specificity methyltransferase that catalyzes the formation of 5-methyluridine at position 54 (m5U54) in all tRNAs, and that of position 341 (m5U341) in tmRNA (transfer-mRNA). The sequence is that of tRNA/tmRNA (uracil-C(5))-methyltransferase from Histophilus somni (strain 129Pt) (Haemophilus somnus).